We begin with the raw amino-acid sequence, 492 residues long: MAHIDRINILANHLSKEEEEENELLTSPVSADKKKETVTVTDNRNGKSYDFKIKNDTINALNFKELQLAKGDGGLMIYDPGFQNTAVVTSYITYIDGDKGILRYRGYPIEELAERSNFLEVAYLLINGNLPNKSQLDGWSNKIMTHTFLHENLVGLMKTFRYDAHPMGMLISTVAALGTFYPEANPALAGGDIFKSENVRNKQIYRIVGKLPTIAACAWRHRIGRPYNTPVNHLGYTENFLYMLDKLSEPDYKPNPVLCRALEILFILHADHELNCSTAAMRHISSSGTDPYTSVAGAAGALYGPSHGGANEAVLDMLIHIGSKENIPQFISDVKSKKKKLMGFGHRIYKNYDPRAKIIRRVAYEVFESLGKEPLIEVATELEKQALEDEYFVSRKLYPNVDFYSGLIYKAMGFPTDMFPVLFTIPRAVGWLAHWVEHLEDPETKIYRPRQVYKGEWFRNYVPIDGRPPAKVRSQDSYSSATTKRYSKVTSH.

Residues His-307, His-346, and Asp-402 contribute to the active site. Residues 469–492 are disordered; sequence PAKVRSQDSYSSATTKRYSKVTSH. Residues 475 to 484 are compositionally biased toward polar residues; that stretch reads QDSYSSATTK.

The protein belongs to the citrate synthase family.

It is found in the peroxisome. The catalysed reaction is oxaloacetate + acetyl-CoA + H2O = citrate + CoA + H(+). The protein operates within carbohydrate metabolism; tricarboxylic acid cycle; isocitrate from oxaloacetate: step 1/2. In terms of biological role, peroxisomal protein involved in the cellular biosynthesis of citrate, and required primarily for cell growth and modulation of multicellular development. This is Citrate synthase, peroxisomal (cshA) from Dictyostelium discoideum (Social amoeba).